Consider the following 788-residue polypeptide: METLLGGLLAFGMAFAVVDACPKYCVCQNLSESLGTLCPSKGLLFVPPDIDRRTVELRLGGNFIIHIGRQDFANMTGLVDLTLSRNTISHIQPFSFLDLESLRSLHLDSNRLPSLGEDTLRGLVNLQHLIVNNNQLGGIADDAFEDFLLTLEDLDLSYNNLHGLPWDSVRRMVNLHQLSLDHNLLDHIAEGTFADLQKLARLDLTSNRLQKLPPDPIFARSQASLLTATPFAPPLSFSFGGNPLHCNCELLWLRRLERDDDLKTCGSPGGLKGRYFWHIREEEFVCEPPLITQHTHKLLVLEGQAATLKCKAIGDPSPLIHWVAPDDRLVGNSSRTAVYDNGTLDILITTSQDSGPFTCIAANAAGEATATVEVSIVQLPHLSNSTSRMAPPKSRLSDITGSSKTSRGGGGSGAGEPPKSTPERAVLVSDVTTTSALVKWSVSKSAPRVKMYQLQYNCSDDEVLIYRMIPASNKAFVVNNLVSGTGYDLCVLAMWDDTATTLTATNIVGCAQFFTKADYPQCQSMHSQILGGTMILVIGGIIVATLLVFIVILMVRYKVCNHDAPGKMAAATVSNVYSQTNGAQPPPLGGMPVGQLPQAPPKVVVRNELMDFSTSLARACDSSSSSSLGSGEAAGLSRGPWRLPPPAPRPKPSLDRLMGAFASLDLKSQRKEELLDSRTPAGRGAGTSARGHHSDREPLLGPPATRARSLLPLPLEGKAKRSHSFDMGDFAAAAAAAPGGYSPPRRVSNIWTKRSLSVNGMLLPFEENDLVGARGTFGSSEWVMESTV.

A signal peptide spans 1-20; the sequence is METLLGGLLAFGMAFAVVDA. The region spanning 21–52 is the LRRNT domain; that stretch reads CPKYCVCQNLSESLGTLCPSKGLLFVPPDIDR. At 21–534 the chain is on the extracellular side; sequence CPKYCVCQNL…MHSQILGGTM (514 aa). 2 N-linked (GlcNAc...) asparagine glycosylation sites follow: N29 and N74. 7 LRR repeats span residues 53-74, 77-98, 101-122, 125-146, 150-171, 174-195, and 198-219; these read RTVE…DFAN, GLVD…SFLD, SLRS…TLRG, NLQH…AFED, TLED…SVRR, NLHQ…TFAD, and KLAR…PIFA. Residues 242–288 enclose the LRRCT domain; that stretch reads NPLHCNCELLWLRRLERDDDLKTCGSPGGLKGRYFWHIREEEFVCEP. Positions 289–375 constitute an Ig-like domain; it reads PLITQHTHKL…GEATATVEVS (87 aa). A disulfide bridge links C310 with C359. Residues N332, N341, N384, and N457 are each glycosylated (N-linked (GlcNAc...) asparagine). A disordered region spans residues 383-423; it reads SNSTSRMAPPKSRLSDITGSSKTSRGGGGSGAGEPPKSTPE. The Fibronectin type-III domain occupies 422 to 518; it reads PERAVLVSDV…GCAQFFTKAD (97 aa). Residues 535–555 form a helical membrane-spanning segment; that stretch reads ILVIGGIIVATLLVFIVILMV. Residues 556–788 are Cytoplasmic-facing; the sequence is RYKVCNHDAP…SSEWVMESTV (233 aa). The segment covering 620-641 has biased composition (low complexity); it reads CDSSSSSSLGSGEAAGLSRGPW. Disordered regions lie at residues 620-655 and 668-707; these read CDSS…PSLD and SQRK…ATRA. Residues 642 to 651 are compositionally biased toward pro residues; it reads RLPPPAPRPK. The PDZ-binding motif lies at 785–788; the sequence is ESTV.

Belongs to the LRFN family. As to quaternary structure, forms heteromeric complexes with LRFN1, LRFN3 and LRFN4. Can form homomeric complexes, but not across cell junctions. Can form heteromeric complexes with LRFN5. Interacts with DLG1, DLG3 and DLG4; interaction with DLG4 is mediated by the PDZ-binding domain. Also interacts with DLG2. Interacts with 2 NMDA receptor subunits GRIN1 and GRIN2A.

The protein localises to the membrane. It localises to the synapse. Its subcellular location is the postsynaptic cell membrane. Promotes neurite outgrowth in hippocampal neurons. Enhances the cell surface expression of GRIN1 and GRIN2A NMDA receptor subunits. May play a role in redistributing DLG4 to the cell periphery. This is Leucine-rich repeat and fibronectin type-III domain-containing protein 2 (Lrfn2) from Rattus norvegicus (Rat).